Here is a 256-residue protein sequence, read N- to C-terminus: 5-oxoprolinase subunit A 1 (256 aa).

The protein belongs to the LamB/PxpA family. As to quaternary structure, forms a complex composed of PxpA, PxpB and PxpC.

It carries out the reaction 5-oxo-L-proline + ATP + 2 H2O = L-glutamate + ADP + phosphate + H(+). Catalyzes the cleavage of 5-oxoproline to form L-glutamate coupled to the hydrolysis of ATP to ADP and inorganic phosphate. This Pseudomonas syringae pv. tomato (strain ATCC BAA-871 / DC3000) protein is 5-oxoprolinase subunit A 1.